We begin with the raw amino-acid sequence, 498 residues long: Protein nucleotidyltransferase YdiU (498 aa).

ATP-binding residues include glycine 88, glycine 90, arginine 91, lysine 111, aspartate 123, glycine 124, arginine 174, and arginine 181. Aspartate 250 (proton acceptor) is an active-site residue. Positions 251 and 260 each coordinate Mg(2+). Aspartate 260 is an ATP binding site.

This sequence belongs to the SELO family. The cofactor is Mg(2+). Mn(2+) serves as cofactor.

The enzyme catalyses L-seryl-[protein] + ATP = 3-O-(5'-adenylyl)-L-seryl-[protein] + diphosphate. The catalysed reaction is L-threonyl-[protein] + ATP = 3-O-(5'-adenylyl)-L-threonyl-[protein] + diphosphate. It carries out the reaction L-tyrosyl-[protein] + ATP = O-(5'-adenylyl)-L-tyrosyl-[protein] + diphosphate. It catalyses the reaction L-histidyl-[protein] + UTP = N(tele)-(5'-uridylyl)-L-histidyl-[protein] + diphosphate. The enzyme catalyses L-seryl-[protein] + UTP = O-(5'-uridylyl)-L-seryl-[protein] + diphosphate. The catalysed reaction is L-tyrosyl-[protein] + UTP = O-(5'-uridylyl)-L-tyrosyl-[protein] + diphosphate. Its function is as follows. Nucleotidyltransferase involved in the post-translational modification of proteins. It can catalyze the addition of adenosine monophosphate (AMP) or uridine monophosphate (UMP) to a protein, resulting in modifications known as AMPylation and UMPylation. This Methylorubrum populi (strain ATCC BAA-705 / NCIMB 13946 / BJ001) (Methylobacterium populi) protein is Protein nucleotidyltransferase YdiU.